Reading from the N-terminus, the 195-residue chain is ALK and LTK ligand 2b (195 aa).

2 disulfide bridges follow: cysteine 156–cysteine 192 and cysteine 170–cysteine 179.

This sequence belongs to the ALKAL family. Homodimer. As to expression, highly expressed in the swim bladder and single cells of unknown identity in the head.

It is found in the secreted. Its subcellular location is the cell membrane. In terms of biological role, cytokine that acts as a physiological ligand for receptor tyrosine kinases LTK and ALK. Required for neural crest cell differentiation and iridophore development during embryonic iridophore development and adult stripe development by acting as a receptor for LTK. Also required for iridophore formation in the adult eye. The sequence is that of ALK and LTK ligand 2b from Danio rerio (Zebrafish).